The following is a 1090-amino-acid chain: Neurofilament heavy polypeptide (1090 aa).

Residues 2-98 (MSFGSADALL…AVAARSEKEQ (97 aa)) are head. Phosphoserine is present on residues Ser-74 and Ser-122. Residues 95–411 (EKEQLQALND…KLLEGEECRI (317 aa)) enclose the IF rod domain. Residues 99–130 (LQALNDRFAGYIDKVRQLEAHNRSLEGEAAAL) are coil 1A. The interval 131-143 (RQQQAGRAAMGEL) is linker 1. Positions 144 to 242 (YEREVREMRG…QEEVGELLGQ (99 aa)) are coil 1B. The segment at 243–264 (IQGCGAAQAQAQAEARDALKCD) is linker 12. Residues 265–286 (VTSALREIRAQLEGHAVQSTLQ) are coil 2A. Residues 287-290 (SEEW) form a linker 2 region. Residues 291–411 (FRVRLDRLSE…KLLEGEECRI (121 aa)) form a coil 2B region. A phosphoserine mark is found at Ser-345, Ser-416, and Ser-419. The tail stretch occupies residues 412 to 1090 (GFGPSPFSLT…TEDKATKGEK (679 aa)). Residues 456-1090 (EGQTEEIRVT…TEDKATKGEK (635 aa)) are disordered. The segment covering 468 to 495 (VTEEEDKEAQGQEGEEAEEGEEKEEEEG) has biased composition (acidic residues). Low complexity predominate over residues 496-506 (AAATSPPAEEA). A phosphoserine mark is found at Ser-508, Ser-523, Ser-529, Ser-535, Ser-541, Ser-547, Ser-553, Ser-559, Ser-565, Ser-571, Ser-577, Ser-583, Ser-589, Ser-595, Ser-601, Ser-607, Ser-613, Ser-619, Ser-625, Ser-631, Ser-637, Ser-643, Ser-649, Ser-655, Ser-661, Ser-667, Ser-673, Ser-679, Ser-685, Ser-691, Ser-697, Ser-703, Ser-709, Ser-715, Ser-721, Ser-727, Ser-733, Ser-739, Ser-745, Ser-751, Ser-757, Ser-763, and Ser-769. A compositionally biased stretch (basic and acidic residues) spans 508–579 (SPEKETKSRV…KSPAEAKSPA (72 aa)). 42 consecutive repeat copies span residues 522–527 (KSPGEA), 528–533 (KSPGEA), 534–539 (KSPAEA), 540–545 (KSPGEA), 546–551 (KSPGEA), 552–557 (KSPGEA), 558–563 (KSPAEP), 564–569 (KSPAEP), 570–575 (KSPAEA), 576–581 (KSPAEP), 582–587 (KSPATV), 588–593 (KSPGEA), 594–599 (KSPSEA), 600–605 (KSPAEA), 606–611 (KSPAEA), 612–617 (KSPAEA), 618–623 (KSPAEA), 624–629 (KSPAEA), 630–635 (KSPAEA), 636–641 (KSPATV), 642–647 (KSPGEA), 648–653 (KSPSEA), 654–659 (KSPAEA), 660–665 (KSPAEA), 666–671 (KSPAEA), 672–677 (KSPAEV), 678–683 (KSPGEA), 684–689 (KSPAEP), 690–695 (KSPAEA), 696–701 (KSPAEV), 702–707 (KSPAEA), 708–713 (KSPAEV), 714–719 (KSPGEA), 720–725 (KSPAAV), 726–731 (KSPAEA), 732–737 (KSPAAV), 738–743 (KSPGEA), 744–749 (KSPGEA), 750–755 (KSPAEA), 756–761 (KSPAEA), 762–767 (KSPIEV), and 768–773 (KSPEKA). Residues 522 to 892 (KSPGEAKSPG…KEEVKSPVKE (371 aa)) form a 52 X 6 AA approximate tandem repeats of K-S-P-[AGISV]-[EATK]-[APVQ] region. Residues 595–633 (SPSEAKSPAEAKSPAEAKSPAEAKSPAEAKSPAEAKSPA) are compositionally biased toward basic and acidic residues. Positions 649-717 (SPSEAKSPAE…KSPAEVKSPG (69 aa)) are enriched in basic and acidic residues. A compositionally biased stretch (basic and acidic residues) spans 745–781 (SPGEAKSPAEAKSPAEAKSPIEVKSPEKAKTPVKEGA). Residues 774-779 (KTPVKE) form a 43; approximate repeat. 6 consecutive repeat copies span residues 782–787 (KSPAEA), 788–793 (KSPEKA), 794–799 (KSPVKE), 808–813 (KSPEKA), 814–819 (KSPVKE), and 833–838 (KSPEAQ). Phosphoserine is present on residues Ser-783, Ser-789, Ser-795, Ser-809, Ser-815, and Ser-834. A compositionally biased stretch (basic and acidic residues) spans 788–834 (KSPEKAKSPVKEDIKPPAEAKSPEKAKSPVKEGAKPPEKAKPLDVKS). Residue Thr-839 is modified to Phosphothreonine. 2 stretches are compositionally biased toward basic and acidic residues: residues 843–964 (EEAK…KAVA) and 974–1090 (GVKE…KGEK). Repeat copies occupy residues 858–863 (KSPAKE), 866–871 (KSPEKE), and 887–892 (KSPVKE). Residues Ser-859, Ser-867, Ser-888, and Ser-947 each carry the phosphoserine modification.

The protein belongs to the intermediate filament family. Forms heterodimers with NEFL; which can further hetero-oligomerize (in vitro). Forms heterodimers with INA (in vitro). Post-translationally, there are a number of repeats of the tripeptide K-S-P, NFH is phosphorylated on a number of the serines in this motif. It is thought that phosphorylation of NFH results in the formation of interfilament cross bridges that are important in the maintenance of axonal caliber. Phosphorylation seems to play a major role in the functioning of the larger neurofilament polypeptides (NF-M and NF-H), the levels of phosphorylation being altered developmentally and coincidentally with a change in the neurofilament function. In terms of processing, phosphorylated in the head and rod regions by the PKC kinase PKN1, leading to the inhibition of polymerization. In terms of tissue distribution, expressed in the sciatic nerve (at protein level).

It is found in the cytoplasm. Its subcellular location is the cytoskeleton. It localises to the cell projection. The protein resides in the axon. In terms of biological role, neurofilaments usually contain three intermediate filament proteins: NEFL, NEFM, and NEFH which are involved in the maintenance of neuronal caliber. NEFH has an important function in mature axons that is not subserved by the two smaller NF proteins. May additionally cooperate with the neuronal intermediate filament proteins PRPH and INA to form neuronal filamentous networks. The chain is Neurofilament heavy polypeptide (Nefh) from Mus musculus (Mouse).